A 713-amino-acid chain; its full sequence is Mitochondrial intermediate peptidase (713 aa).

The N-terminal 35 residues, 1–35 (MLCVGRLGGLGARAAALPPRRAGRGILEAGIRARR), are a transit peptide targeting the mitochondrion. K126 is subject to N6-acetyllysine. H495 is a Zn(2+) binding site. E496 is an active-site residue. Residues H499 and H502 each contribute to the Zn(2+) site.

It belongs to the peptidase M3 family. Monomer. The cofactor is Zn(2+).

It is found in the mitochondrion matrix. It carries out the reaction Release of an N-terminal octapeptide as second stage of processing of some proteins imported into the mitochondrion.. With respect to regulation, activity is divalent cation-dependent. It is stimulated by manganese, magnesium or calcium ions and reversibly inhibited by zinc, cobalt and iron. In terms of biological role, cleaves proteins, imported into the mitochondrion, to their mature size. In Pongo abelii (Sumatran orangutan), this protein is Mitochondrial intermediate peptidase (MIPEP).